We begin with the raw amino-acid sequence, 311 residues long: MATYLEFEEKIKKIEEDIIVAKTKADEPAVDILEKKLEKEVEKTFKNLNDYQKLQLARHPDRPYALDYISGLLKNAYEVHGDRHYVDDHAIVCYFGFIDNQKVLVIGEQKGRGTKEKLQRNFGMPSPEGYRKALRAAKMADKFQIPILMLVDTPGAYPGIGAEERNQSEAIAKNLFEFADLTTPTISVVIGEGGSGGALAISVADKLAMMRYSVYAVISPEGCSAILWNDPTKVETAANALKITAENLKELNLIDDVINEPLIGAHRQKEQAIFALKEYFIKSLAELKKLTPQERLDKKYQKLMNLGSFTK.

A CoA carboxyltransferase C-terminal domain is found at 36 to 286 (KLEKEVEKTF…KEYFIKSLAE (251 aa)).

The protein belongs to the AccA family. In terms of assembly, acetyl-CoA carboxylase is a heterohexamer composed of biotin carboxyl carrier protein (AccB), biotin carboxylase (AccC) and two subunits each of ACCase subunit alpha (AccA) and ACCase subunit beta (AccD).

It localises to the cytoplasm. The catalysed reaction is N(6)-carboxybiotinyl-L-lysyl-[protein] + acetyl-CoA = N(6)-biotinyl-L-lysyl-[protein] + malonyl-CoA. Its pathway is lipid metabolism; malonyl-CoA biosynthesis; malonyl-CoA from acetyl-CoA: step 1/1. Its function is as follows. Component of the acetyl coenzyme A carboxylase (ACC) complex. First, biotin carboxylase catalyzes the carboxylation of biotin on its carrier protein (BCCP) and then the CO(2) group is transferred by the carboxyltransferase to acetyl-CoA to form malonyl-CoA. The protein is Acetyl-coenzyme A carboxylase carboxyl transferase subunit alpha of Aliarcobacter butzleri (strain RM4018) (Arcobacter butzleri).